We begin with the raw amino-acid sequence, 214 residues long: Cutinase CUT2 (214 aa).

The N-terminal stretch at 1 to 18 (MQFSLSIATAILAATASA) is a signal peptide. Cys-40 and Cys-117 are joined by a disulfide. Residue Ser-128 is the Nucleophile of the active site. Residues Cys-179 and Cys-186 are joined by a disulfide bond. Residue Asp-183 is part of the active site. The active-site Proton donor/acceptor is the His-196.

This sequence belongs to the cutinase family. Post-translationally, the 2 disulfide bonds play a critical role in holding the catalytic residues in juxta-position; reduction of the disulfide bridges results in the complete inactivation of the enzyme.

The protein resides in the secreted. It catalyses the reaction cutin + H2O = cutin monomers.. Its function is as follows. Catalyzes the hydrolysis of complex carboxylic polyesters found in the cell wall of plants. Degrades cutin, a macromolecule that forms the structure of the plant cuticle. Required for efficient penetration of the host plant cuticle by the appressorium during the initial stage of fungal infection. The protein is Cutinase CUT2 of Pyricularia oryzae (strain 70-15 / ATCC MYA-4617 / FGSC 8958) (Rice blast fungus).